A 299-amino-acid chain; its full sequence is 4-hydroxybenzoate octaprenyltransferase (299 aa).

8 consecutive transmembrane segments (helical) span residues 33-53 (VGFLLLLWPTWWALWLAADGV), 56-76 (WWTLCVFTTGIWLTRSAGCVI), 107-127 (LLMFATLMLIAFGLVLTMNQL), 151-171 (LPQVYLGLAFGWGIPMAFAAI), 180-200 (WLLYIANILWTTAYDTWYAMV), 213-233 (IAILFAELDLVVQGVLYTLML), 247-267 (HTYWISLISAVALIGYQFIIA), and 278-298 (AFMHNNWVGMTIFAGIALATT).

It belongs to the UbiA prenyltransferase family. Mg(2+) serves as cofactor.

It localises to the cell inner membrane. It catalyses the reaction all-trans-octaprenyl diphosphate + 4-hydroxybenzoate = 4-hydroxy-3-(all-trans-octaprenyl)benzoate + diphosphate. It functions in the pathway cofactor biosynthesis; ubiquinone biosynthesis. Catalyzes the prenylation of para-hydroxybenzoate (PHB) with an all-trans polyprenyl group. Mediates the second step in the final reaction sequence of ubiquinone-8 (UQ-8) biosynthesis, which is the condensation of the polyisoprenoid side chain with PHB, generating the first membrane-bound Q intermediate 3-octaprenyl-4-hydroxybenzoate. This chain is 4-hydroxybenzoate octaprenyltransferase, found in Xylella fastidiosa (strain M12).